We begin with the raw amino-acid sequence, 312 residues long: uncharacterized protein (312 aa).

Composition is skewed to basic and acidic residues over residues 1 to 17 (MAKY…EQLE) and 28 to 39 (PDRDGPRHSAKL). Residues 1–39 (MAKYDHLELVRLPEQLERRKHGGGSPPPDRDGPRHSAKL) are disordered.

This is an uncharacterized protein from Sinorhizobium fredii (strain NBRC 101917 / NGR234).